A 94-amino-acid chain; its full sequence is Cell division topological specificity factor (94 aa).

It belongs to the MinE family.

In terms of biological role, prevents the cell division inhibition by proteins MinC and MinD at internal division sites while permitting inhibition at polar sites. This ensures cell division at the proper site by restricting the formation of a division septum at the midpoint of the long axis of the cell. In Hamiltonella defensa subsp. Acyrthosiphon pisum (strain 5AT), this protein is Cell division topological specificity factor.